The sequence spans 365 residues: tRNA/tmRNA (uracil-C(5))-methyltransferase (365 aa).

S-adenosyl-L-methionine contacts are provided by Gln189, Tyr217, Asn222, Glu238, and Asp298. Cys323 functions as the Nucleophile in the catalytic mechanism. Residue Glu357 is the Proton acceptor of the active site.

This sequence belongs to the class I-like SAM-binding methyltransferase superfamily. RNA M5U methyltransferase family. TrmA subfamily.

It carries out the reaction uridine(54) in tRNA + S-adenosyl-L-methionine = 5-methyluridine(54) in tRNA + S-adenosyl-L-homocysteine + H(+). It catalyses the reaction uridine(341) in tmRNA + S-adenosyl-L-methionine = 5-methyluridine(341) in tmRNA + S-adenosyl-L-homocysteine + H(+). Its function is as follows. Dual-specificity methyltransferase that catalyzes the formation of 5-methyluridine at position 54 (m5U54) in all tRNAs, and that of position 341 (m5U341) in tmRNA (transfer-mRNA). The sequence is that of tRNA/tmRNA (uracil-C(5))-methyltransferase from Proteus mirabilis (strain HI4320).